The sequence spans 166 residues: Protein C2-DOMAIN ABA-RELATED 11 (166 aa).

Met1 carries the post-translational modification N-acetylmethionine. The C2 domain maps to 1–103 (MGEPLGLLQV…ISVARLRHVV (103 aa)). Gly2 bears the N-acetylglycine; in Protein C2-DOMAIN ABA-RELATED 11, N-terminally processed mark. 7 residues coordinate Ca(2+): Arg21, Asp22, Asp27, Asp73, Lys74, Asp75, and Asp81.

This sequence belongs to the plant CAR protein family. In terms of assembly, binds to PYR/PYL/RCAR abscisic acid intracellular receptors in an ABA-independent manner, both at the plasma membrane and in the nucleus.

It is found in the cell membrane. The protein resides in the nucleus. Functionally, stimulates the GTPase/ATPase activities of Obg-like ATPases. Mediates the transient calcium-dependent interaction of PYR/PYL/RCAR abscisic acid (ABA) receptors with the plasma membrane and thus regulates ABA sensitivity. This chain is Protein C2-DOMAIN ABA-RELATED 11, found in Arabidopsis thaliana (Mouse-ear cress).